The sequence spans 40 residues: Photosystem II reaction center protein L (40 aa).

Residues 19-39 (SLYWGLLLIFVLAVLFSNYFF) traverse the membrane as a helical segment.

It belongs to the PsbL family. As to quaternary structure, PSII is composed of 1 copy each of membrane proteins PsbA, PsbB, PsbC, PsbD, PsbE, PsbF, PsbH, PsbI, PsbJ, PsbK, PsbL, PsbM, PsbT, PsbX, PsbY, PsbZ, Psb30/Ycf12, at least 3 peripheral proteins of the oxygen-evolving complex and a large number of cofactors. It forms dimeric complexes.

It localises to the plastid. It is found in the chloroplast thylakoid membrane. Functionally, one of the components of the core complex of photosystem II (PSII). PSII is a light-driven water:plastoquinone oxidoreductase that uses light energy to abstract electrons from H(2)O, generating O(2) and a proton gradient subsequently used for ATP formation. It consists of a core antenna complex that captures photons, and an electron transfer chain that converts photonic excitation into a charge separation. This subunit is found at the monomer-monomer interface and is required for correct PSII assembly and/or dimerization. The sequence is that of Photosystem II reaction center protein L from Nandina domestica (Heavenly bamboo).